The sequence spans 58 residues: DQNCDIGNITSQCEMQHQNCDDANGCNTIIEECKTSMVERCQNQEFESASGSTTLGPQ.

3 disulfides stabilise this stretch: C4-C41, C13-C33, and C20-C26. The N-linked (GlcNAc...) asparagine glycan is linked to N8.

In terms of tissue distribution, produced by the albumen gland of the egg cordons.

Its subcellular location is the secreted. Functionally, water-borne pheromone that attract the marine mollusk Aplysia into breeding aggregations and coordinate male and female reproductive behavior within the aggregation. This Aplysia fasciata (Mottled sea hare) protein is Attractin (ATT).